We begin with the raw amino-acid sequence, 618 residues long: 1-deoxy-D-xylulose-5-phosphate synthase (618 aa).

Residues His73 and 114-116 each bind thiamine diphosphate; that span reads GHS. Asp145 provides a ligand contact to Mg(2+). Thiamine diphosphate-binding positions include 146-147, Asn174, Tyr284, and Glu364; that span reads GA. Mg(2+) is bound at residue Asn174.

It belongs to the transketolase family. DXPS subfamily. In terms of assembly, homodimer. It depends on Mg(2+) as a cofactor. Thiamine diphosphate serves as cofactor.

The catalysed reaction is D-glyceraldehyde 3-phosphate + pyruvate + H(+) = 1-deoxy-D-xylulose 5-phosphate + CO2. It functions in the pathway metabolic intermediate biosynthesis; 1-deoxy-D-xylulose 5-phosphate biosynthesis; 1-deoxy-D-xylulose 5-phosphate from D-glyceraldehyde 3-phosphate and pyruvate: step 1/1. In terms of biological role, catalyzes the acyloin condensation reaction between C atoms 2 and 3 of pyruvate and glyceraldehyde 3-phosphate to yield 1-deoxy-D-xylulose-5-phosphate (DXP). The polypeptide is 1-deoxy-D-xylulose-5-phosphate synthase (Clostridium beijerinckii (strain ATCC 51743 / NCIMB 8052) (Clostridium acetobutylicum)).